A 242-amino-acid chain; its full sequence is Placenta-expressed transcript 1 protein (242 aa).

The N-terminal stretch at 1 to 26 (MAVLRSLLPQLGLFLCLALCFSPALS) is a signal peptide. N-linked (GlcNAc...) asparagine glycans are attached at residues Asn47, Asn56, and Asn66. Ser223 carries the GPI-anchor amidated serine lipid modification. A propeptide spans 224 to 242 (PLAGALHILLVFLISKLLF) (removed in mature form).

Post-translationally, N-glycosylated. In terms of processing, GPI-anchored. Present at high level in the dermal sheath cells near the bulge area of the hair follicle and in the differentiated sebocytes of the normal adult skin (at protein level).

It is found in the apical cell membrane. Functionally, modulates leading keratinocyte migration and cellular adhesion to matrix proteins during a wound-healing response and promotes wound repair. May play a role during trichilemmal differentiation of the hair follicle. The protein is Placenta-expressed transcript 1 protein (PLET1) of Mesocricetus auratus (Golden hamster).